A 505-amino-acid polypeptide reads, in one-letter code: MKLGIIPYQEGTDIVYKNALQGQQEGKRPNLPQMEATHQIKSSVQGTSYEFVRTEDIPLNRRHFVYRPCSANPFFTILGYGCTEYPFDHSGMSVMDRSEGLSISRDGNDLVSVPDQYGWRTARSDVCIKEGMTYWEVEVIRGGNKKFADGVNNKENADDSVDEVQSGIYEKMHKQVNDTPHLRFGVCRREASLEAPVGFDVYGYGIRDISLESIHEGKLNCVLENGSPLKEGDKIGFLLSLPSIHTQIKQAKEFTKRRIFALNSHMDTMNEPWREDAENGPSRKKLKQETTNKEFQRALLEDIEYNDVVRDQIAIRYKNQLFFEATDYVKTTKPEYYSSDKRERQDYYQLEDSYLAIFQNGKYLGKAFENLKPLLPPFSELQYNEKFYLGYWQHGEARDESNDKNTTSAKKKKQQQKKKKGLILRNKYVNNNKLGYYPTISCFNGGTARIISEEDKLEYLDQIRSAYCVDGNSKVNTLDTLYKEQIAEDIVWDIIDELEQIALQQ.

The B30.2/SPRY domain maps to 70–295; that stretch reads SANPFFTILG…LKQETTNKEF (226 aa). Ser-227 is subject to Phosphoserine. The disordered stretch occupies residues 271–290; it reads EPWREDAENGPSRKKLKQET. Lys-318 provides a ligand contact to DNA. The interval 398–420 is disordered; it reads RDESNDKNTTSAKKKKQQQKKKK. Residues 409–420 are compositionally biased toward basic residues; that stretch reads AKKKKQQQKKKK.

Belongs to the cclA family. As to quaternary structure, component of the Set1C/COMPASS complex which consists of SET1(2), BRE2(2), SPP1(2), SDC1(1), SHG1(1), SWD1(1), SWD2(1), and SWD3(1). Interacts directly with SDC1.

The protein resides in the nucleus. The protein localises to the chromosome. Its subcellular location is the telomere. Its function is as follows. Component of the Set1C/COMPASS complex that specifically mono-, di- and trimethylates histone H3 to form H3K4me1/2/3, which subsequently plays a role in telomere length maintenance and transcription elongation regulation. COMPASS recognizes ubiquitinated H2B on one face of the nucleosome which stimulates the methylation of H3 on the opposing face. The protein is COMPASS component BRE2 of Saccharomyces cerevisiae (strain ATCC 204508 / S288c) (Baker's yeast).